A 235-amino-acid polypeptide reads, in one-letter code: Phosphoribosylaminoimidazole-succinocarboxamide synthase (235 aa).

This sequence belongs to the SAICAR synthetase family.

It catalyses the reaction 5-amino-1-(5-phospho-D-ribosyl)imidazole-4-carboxylate + L-aspartate + ATP = (2S)-2-[5-amino-1-(5-phospho-beta-D-ribosyl)imidazole-4-carboxamido]succinate + ADP + phosphate + 2 H(+). It functions in the pathway purine metabolism; IMP biosynthesis via de novo pathway; 5-amino-1-(5-phospho-D-ribosyl)imidazole-4-carboxamide from 5-amino-1-(5-phospho-D-ribosyl)imidazole-4-carboxylate: step 1/2. The chain is Phosphoribosylaminoimidazole-succinocarboxamide synthase from Clostridium kluyveri (strain NBRC 12016).